The chain runs to 129 residues: Succinate dehydrogenase cytochrome b556 subunit (129 aa).

Over 1 to 26 (MIRNVKKQRPVNLDLQTIRFPITAIA) the chain is Cytoplasmic. The helical transmembrane segment at 27-52 (SILHRVSGVITFVAVGILLWLLGTSL) threads the bilayer. At 53–68 (SSPEGFEQASAIMGSF) the chain is on the periplasmic side. The helical transmembrane segment at 69–89 (FVKFIMWGILTALAYHVVVGI) threads the bilayer. H84 lines the heme pocket. The Cytoplasmic portion of the chain corresponds to 90–108 (RHMMMDFGYLEETFEAGKR). A helical transmembrane segment spans residues 109 to 129 (SAKISFVITVVLSLLAGVLVW).

Belongs to the cytochrome b560 family. Part of an enzyme complex containing four subunits: a flavoprotein, an iron-sulfur protein, plus two membrane-anchoring proteins, SdhC and SdhD. The complex can form homotrimers. Heme is required as a cofactor.

It localises to the cell inner membrane. It participates in carbohydrate metabolism; tricarboxylic acid cycle. In terms of biological role, membrane-anchoring subunit of succinate dehydrogenase (SDH). In Escherichia coli O157:H7, this protein is Succinate dehydrogenase cytochrome b556 subunit (sdhC).